We begin with the raw amino-acid sequence, 84 residues long: ICP35 (84 aa).

The chain is ICP35 from Crustacea (WSSV).